The following is a 360-amino-acid chain: Archaemetzincin-2 (360 aa).

Histidine 254 is a binding site for Zn(2+). Residue glutamate 255 is the Proton acceptor of the active site. Residues histidine 258, histidine 264, cysteine 265, cysteine 270, cysteine 289, and cysteine 292 each contribute to the Zn(2+) site.

This sequence belongs to the peptidase M54 family. The cofactor is Zn(2+).

In terms of biological role, probable zinc metalloprotease. The protein is Archaemetzincin-2 (AMZ2) of Macaca fascicularis (Crab-eating macaque).